The sequence spans 122 residues: Large-conductance mechanosensitive channel (122 aa).

Transmembrane regions (helical) follow at residues 29–49 (FGKIVSSLVADVIMPIIGLIF) and 66–86 (GVFIQSIVDFLIVAGAIFLFI).

It belongs to the MscL family. Homopentamer.

The protein localises to the cell membrane. Functionally, channel that opens in response to stretch forces in the membrane lipid bilayer. May participate in the regulation of osmotic pressure changes within the cell. The sequence is that of Large-conductance mechanosensitive channel from Macrococcus caseolyticus (strain JCSC5402) (Macrococcoides caseolyticum).